A 666-amino-acid polypeptide reads, in one-letter code: MGAGQSTRSSLNKSSPEELSHVLAHRFASKCFTPLELTHFKDNFNSRALDENGLRHWNEEILSQFLGIPDGAGEKAGPHTDATLDAGPVIFRMVSYLGAFPFQNTLAPSVLTYEAIIKVVVLLTERYGRVLRRGRKDRIKLLFGSLADVGRTQVEEKEMPVQESNDGKANGIAKGNPSHVTGFAIDAPANDDEEEEDDDDDLALAALESLDAIEVFKHDQRIDRSVYKARVSIDTFRRLIALILVIAPLHPIGTTSKLIADQDAESIDAIQAQVDSIIAAFGEEADNDGITYKSFSRVLRTSLPFLFDPLTPLFEHFLFSKNLDLSRRKESRSTEPEHEKSSSTPPPHSPHSESVFLPGPFESNILNTALLSHLSFFLSTSYPLPNLFRNGTRLHPVFSSVYHGESLTAFSHHVLTWHAPSILLLKGVTDSSSSRQDTVLVGAYLPEPWKQSSTTSSDHASDYLDSSKFPCLFQLLPTHTVLLASPFFKTLKFNMPVASFSTKSGIALGCMIPPSSRTSLHHDLRPRPAGGGSLIIDPALENATFVVSDGLNGDGVFLPPGLSPSSSSSFSASALSSTTSISVHAIEVWGVVPTQPELGPVLDPDSSRGDAVAAQKAAWDFEAREAERRRTIHLKVGGGDSEEQTGRALLEMAGIIGDSNYSPRKH.

Positions 329 to 341 are enriched in basic and acidic residues; that stretch reads KESRSTEPEHEKS. The segment at 329-354 is disordered; sequence KESRSTEPEHEKSSSTPPPHSPHSES. The TLDc domain maps to 364–592; the sequence is NILNTALLSH…VHAIEVWGVV (229 aa).

This sequence belongs to the RTC5 family.

It is found in the cytoplasm. Its function is as follows. May be involved in a process influencing telomere capping. In Coccidioides posadasii (strain C735) (Valley fever fungus), this protein is Restriction of telomere capping protein 5 (RTC5).